Consider the following 313-residue polypeptide: PDCD10 and GCKIII kinases-associated protein 1 (313 aa).

The disordered stretch occupies residues 42–95 (KGTQNSEVEVPGSTLHSGSLSKPDSSGSTTGLPCQGSLTQEDSEERPCVEKHGI). Low complexity predominate over residues 58–69 (SGSLSKPDSSGS). Ser-60 bears the Phosphoserine mark. The span at 70-81 (TTGLPCQGSLTQ) shows a compositional bias: polar residues. A Phosphothreonine modification is found at Thr-104. Ser-107, Ser-237, and Ser-240 each carry phosphoserine. A disordered region spans residues 253–288 (YFKEEDPTQPTPVADPGNEREDPHTYNGNKEGAVVD).

In terms of assembly, interacts with KEAP1; this interaction prevents the ubiquitination of KEAP1 by TRIM25, thus protecting KEAP1 from degradation. Found in association with PDCD10 and members of the STE20 kinases, such as STK24, STK25, and STK26.

It is found in the cell membrane. Acts as a tumor suppressor. Acts as a tumor suppressor for colorectal cancer cell proliferation by targeting KEAP1/USP17/ELK1/CDK6 axis. This is PDCD10 and GCKIII kinases-associated protein 1 from Rattus norvegicus (Rat).